We begin with the raw amino-acid sequence, 153 residues long: MVNALEVPADLLIRRVARKLKEKYPQVKPPAWAYFAKTGPHKERPPTDRDWWYVRAASILRKLYKSPEPIGIETFRTIYGGRQNRGSAPEHFRKAGGSVPRKILQQLEEAGLVVKVPGRGRTISPAGRSLLDTTAREIMEELVKTRPELERYL.

It belongs to the eukaryotic ribosomal protein eS19 family. Part of the 30S ribosomal subunit.

In terms of biological role, may be involved in maturation of the 30S ribosomal subunit. In Aeropyrum pernix (strain ATCC 700893 / DSM 11879 / JCM 9820 / NBRC 100138 / K1), this protein is Small ribosomal subunit protein eS19.